The following is a 177-amino-acid chain: MGEVLEFEEYVRTRQDALLRSARRLVPDPVDAQDLLQTALARTYGRWETIEDKRLADAYLRRVMINTRTEWWRARKLEEVPTEQLPESPMDDATEQHADRALLMDVLKVLAPKQRSVVVLRHWEQMSTEETAAALGMSAGTVKSTLHRALARLREELVARDLDARALEREERERCAA.

The Polymerase core binding signature appears at 34 to 47 (DLLQTALARTYGRW). The segment at residues 128–147 (TEETAAALGMSAGTVKSTLH) is a DNA-binding region (H-T-H motif).

It belongs to the sigma-70 factor family. ECF subfamily.

Its subcellular location is the cytoplasm. Functionally, sigma factors are initiation factors that promote the attachment of RNA polymerase to specific initiation sites and are then released. This sigma factor is required for normal cell wall integrity; it is recruited by RNA polymerase to transcribe genes with cell wall-related functions. It is also involved in the transcription of the dagA gene coding for an extracellular agar-degrading enzyme. This chain is RNA polymerase sigma-E factor (sigE), found in Streptomyces coelicolor (strain ATCC BAA-471 / A3(2) / M145).